A 262-amino-acid polypeptide reads, in one-letter code: tRNA pseudouridine synthase A (262 aa).

Asp-54 functions as the Nucleophile in the catalytic mechanism. Tyr-113 contributes to the substrate binding site.

It belongs to the tRNA pseudouridine synthase TruA family. As to quaternary structure, homodimer.

It carries out the reaction uridine(38/39/40) in tRNA = pseudouridine(38/39/40) in tRNA. Its function is as follows. Formation of pseudouridine at positions 38, 39 and 40 in the anticodon stem and loop of transfer RNAs. The chain is tRNA pseudouridine synthase A from Lactobacillus acidophilus (strain ATCC 700396 / NCK56 / N2 / NCFM).